Here is a 466-residue protein sequence, read N- to C-terminus: Phage-like element PBSX protein XkdK (466 aa).

Belongs to the myoviridae tail sheath protein family.

The polypeptide is Phage-like element PBSX protein XkdK (xkdK) (Bacillus subtilis (strain 168)).